The chain runs to 188 residues: Calcium load-activated calcium channel (188 aa).

Topologically, residues 1 to 4 are lumenal; it reads MSTM. Residues 5–32 form a helical membrane-spanning segment; it reads FADTILIVFISICTALLAEGITWVLVYR. The stretch at 32–89 forms a coiled coil; it reads RTDKYKRLKAEVEKQSKKLEKKKETITESAGRQQKKKIERQEEKLKNNNRDLSMVRMK. The Cytoplasmic segment spans residues 33–86; sequence TDKYKRLKAEVEKQSKKLEKKKETITESAGRQQKKKIERQEEKLKNNNRDLSMV. A helical membrane pass occupies residues 87–106; the sequence is RMKSMFAIGFCFTALMGMFN. Over 107 to 120 the chain is Lumenal; it reads SIFDGRVVAKLPFV. Residues 121 to 130 lie within the membrane without spanning it; it reads PLSYIQGLSH. The Lumenal segment spans residues 131–140; sequence RNLLGEDYTD. Residues 141–162 form a helical membrane-spanning segment; the sequence is CSFIFLYILCTMSIRQNIQKML. The Cytoplasmic portion of the chain corresponds to 163–188; that stretch reads GLAPSRAATKQAGGFLGPPPQAAKFS.

The protein belongs to the TMCO1 family. In terms of assembly, homodimer and homotetramer. Component of the multi-pass translocon (MPT) complex.

It is found in the endoplasmic reticulum membrane. It localises to the golgi apparatus membrane. Calcium-selective channel required to prevent calcium stores from overfilling, thereby playing a key role in calcium homeostasis. In response to endoplasmic reticulum (ER) overloading, assembles into a homotetramer, forming a functional calcium-selective channel, regulating the calcium content in endoplasmic reticulum store. Component of the multi-pass translocon (MPT) complex that mediates insertion of multi-pass membrane proteins into the lipid bilayer of membranes. The chain is Calcium load-activated calcium channel from Danio rerio (Zebrafish).